A 309-amino-acid polypeptide reads, in one-letter code: Ribonuclease Z (309 aa).

Positions 63, 65, 67, 68, 143, 213, and 271 each coordinate Zn(2+). Catalysis depends on D67, which acts as the Proton acceptor.

Belongs to the RNase Z family. Homodimer. Zn(2+) is required as a cofactor.

The enzyme catalyses Endonucleolytic cleavage of RNA, removing extra 3' nucleotides from tRNA precursor, generating 3' termini of tRNAs. A 3'-hydroxy group is left at the tRNA terminus and a 5'-phosphoryl group is left at the trailer molecule.. In terms of biological role, zinc phosphodiesterase, which displays some tRNA 3'-processing endonuclease activity. Probably involved in tRNA maturation, by removing a 3'-trailer from precursor tRNA. The sequence is that of Ribonuclease Z from Phocaeicola vulgatus (strain ATCC 8482 / DSM 1447 / JCM 5826 / CCUG 4940 / NBRC 14291 / NCTC 11154) (Bacteroides vulgatus).